Here is a 290-residue protein sequence, read N- to C-terminus: Pyridoxal kinase PdxY (290 aa).

Residues serine 12 and 47–48 (TQ) contribute to the substrate site. Residues aspartate 114, glutamate 151, lysine 184, and 211–214 (RPLL) each bind ATP. Aspartate 225 serves as a coordination point for substrate.

Belongs to the pyridoxine kinase family. PdxY subfamily. As to quaternary structure, homodimer. Requires Mg(2+) as cofactor.

It catalyses the reaction pyridoxal + ATP = pyridoxal 5'-phosphate + ADP + H(+). Its pathway is cofactor metabolism; pyridoxal 5'-phosphate salvage; pyridoxal 5'-phosphate from pyridoxal: step 1/1. Functionally, pyridoxal kinase involved in the salvage pathway of pyridoxal 5'-phosphate (PLP). Catalyzes the phosphorylation of pyridoxal to PLP. This is Pyridoxal kinase PdxY from Pseudomonas putida (strain GB-1).